The sequence spans 511 residues: E3 ubiquitin-protein ligase TRIM7 (511 aa).

The RING-type zinc-finger motif lies at 29–82; sequence CSICLELFREPVSVECGHSFCRACIGRCWERPGAGSVGAATRAPPFPLPCPQCR. The residue at position 107 (S107) is a Phosphoserine; by RPS6KA5. The segment at 125-166 adopts a B box-type zinc-finger fold; sequence AAAARCGQHGEPFKLYCQDDGRAICVVCDRAREHREHAVLPL. Residues C130, H133, C152, and H158 each contribute to the Zn(2+) site. Residues 166–263 are a coiled coil; it reads LDEAVQEAKE…AQLGVEITQL (98 aa). The region spanning 324–511 is the B30.2/SPRY domain; the sequence is MLKKFKEDLR…STGTYLRIWP (188 aa).

It belongs to the TRIM/RBCC family. Forms homodimers. Interacts with GNIP2. Interacts with GYG1. Interacts with RNF187 (via C-terminus). In terms of processing, phosphorylated at Ser-107 by RPS6KA5/MSK1, which stimulates the ubiquitin ligase activity. Auto-ubiquitinates via 'Lys-63'-linked polyubiquitination. Skeletal muscle and placenta, at lower levels in heart, brain and pancreas. Isoform 1 is widely expressed with high level in testis, kidney and heart.

It localises to the nucleus. Its subcellular location is the cytoplasm. The protein resides in the golgi apparatus. The enzyme catalyses S-ubiquitinyl-[E2 ubiquitin-conjugating enzyme]-L-cysteine + [acceptor protein]-L-lysine = [E2 ubiquitin-conjugating enzyme]-L-cysteine + N(6)-ubiquitinyl-[acceptor protein]-L-lysine.. It functions in the pathway protein modification; protein ubiquitination. Its function is as follows. E3 ubiquitin-protein ligase that have both tumor-promoting and tumor-suppressing activities and functions in several biological processes including innate immunity, regulation of ferroptosis as well as cell proliferation and migration. Acts as an antiviral effector against multiple viruses by targeting specific viral proteins for ubiquitination and degradation including norovirus NTPase protein or SARS-CoV-2 NSP5 and NSP8 proteins. Mechanistically, recognizes the C-terminal glutamine-containing motif usually generated by viral proteases that process the polyproteins and trigger their ubiquitination and subsequent degradation. Mediates 'Lys-63'-linked polyubiquitination and stabilization of the JUN coactivator RNF187 in response to growth factor signaling via the MEK/ERK pathway, thereby regulating JUN transactivation and cellular proliferation. Promotes the TLR4-mediated signaling activation through its E3 ligase domain leading to production of pro-inflammatory cytokines and type I interferon. Also plays a negative role in the regulation of exogenous cytosolic DNA virus-triggered immune response. Mechanistically, enhances the 'Lys-48'-linked ubiquitination of STING1 leading to its proteasome-dependent degradation. Mediates the ubiquitination of the SIN3-HDAC chromatin remodeling complex component BRMS1. Modulates NCOA4-mediated ferritinophagy and ferroptosis in glioblastoma cells by ubiquitinating NCOA4, leading to its degradation. In terms of biological role, (Microbial infection) Promotes Zika virus replication by mediating envelope protein E ubiquitination. This chain is E3 ubiquitin-protein ligase TRIM7 (TRIM7), found in Homo sapiens (Human).